Here is a 223-residue protein sequence, read N- to C-terminus: Deoxyribose-phosphate aldolase (223 aa).

Asp91 acts as the Proton donor/acceptor in catalysis. Catalysis depends on Lys153, which acts as the Schiff-base intermediate with acetaldehyde. The Proton donor/acceptor role is filled by Lys182.

This sequence belongs to the DeoC/FbaB aldolase family. DeoC type 1 subfamily.

The protein resides in the cytoplasm. It carries out the reaction 2-deoxy-D-ribose 5-phosphate = D-glyceraldehyde 3-phosphate + acetaldehyde. The protein operates within carbohydrate degradation; 2-deoxy-D-ribose 1-phosphate degradation; D-glyceraldehyde 3-phosphate and acetaldehyde from 2-deoxy-alpha-D-ribose 1-phosphate: step 2/2. Its function is as follows. Catalyzes a reversible aldol reaction between acetaldehyde and D-glyceraldehyde 3-phosphate to generate 2-deoxy-D-ribose 5-phosphate. The protein is Deoxyribose-phosphate aldolase of Streptococcus pyogenes serotype M1.